A 219-amino-acid chain; its full sequence is Interleukin-6 (219 aa).

The signal sequence occupies residues 1–20; sequence MNSSTRYLSLLSALVVLVKG. A disulfide bond links C103 and C111.

The protein belongs to the IL-6 superfamily. In terms of assembly, component of a hexamer of two molecules each of IL6, IL6R and IL6ST; first binds to IL6R to associate with the signaling subunit IL6ST. In terms of tissue distribution, expressed in spleen, gill and gastrointestinal tract, ovary and brain. Highest expression in ovary.

The protein resides in the secreted. Its function is as follows. Cytokine with a wide variety of biological functions in immunity, tissue regeneration, and metabolism. Binds to IL6R, then the complex associates to the signaling subunit IL6ST/gp130 to trigger the intracellular IL6-signaling pathway. The interaction with the membrane-bound IL6R and IL6ST stimulates 'classic signaling', whereas the binding of IL6 and soluble IL6R to IL6ST stimulates 'trans-signaling'. Alternatively, 'cluster signaling' occurs when membrane-bound IL6:IL6R complexes on transmitter cells activate IL6ST receptors on neighboring receiver cells. This chain is Interleukin-6 (il6), found in Oncorhynchus mykiss (Rainbow trout).